A 156-amino-acid chain; its full sequence is Rhombotin-1 (156 aa).

2 consecutive LIM zinc-binding domains span residues lysine 22–threonine 84 and glycine 86–asparagine 148.

Expressed in the brain and not in the thymus.

It localises to the nucleus. May be involved in gene regulation within neural lineage cells potentially by direct DNA binding or by binding to other transcription factors. This Mus musculus (Mouse) protein is Rhombotin-1 (Lmo1).